Consider the following 315-residue polypeptide: Protein-export membrane protein SecF (315 aa).

Helical transmembrane passes span 35–55 (MVLYPLVVFLVAALILAVHFP), 152–172 (QGIKAVIYAFIGMAIVVFLFF), 181–201 (IIFSAFSDMVIALATMGILGI), 205–225 (TATIAALLMLIGYTVDSNILL), 242–264 (LSAVSTGFTMSTTTLGALFILWL), and 282–302 (LLADFMNTWIFNAGVLRWYIA).

It belongs to the SecD/SecF family. SecF subfamily. Part of the protein translocation apparatus. Forms a complex with SecD.

The protein resides in the cell membrane. Functionally, involved in protein export. This Thermococcus gammatolerans (strain DSM 15229 / JCM 11827 / EJ3) protein is Protein-export membrane protein SecF.